The chain runs to 715 residues: Protein DENND6 homolog (715 aa).

Positions 13–58 (MIFKEEEIKKQQILLEKEEKEKQEQQQKKLNKDNIFKLEEEGKKLE) form a coiled coil. A uDENN domain is found at 96–273 (NSFCIINFDL…VKQHQLGGGS (178 aa)). Disordered regions lie at residues 269–296 (LGGGSGGGLSSSPSSSSGGGNIPTSNTT) and 392–416 (SGTRPDDSNNNNNQDDSEYNNNNNN). The region spanning 299-476 (SPSIWSEMKL…KDLLTRHVLD (178 aa)) is the cDENN domain. Residues 399–416 (SNNNNNQDDSEYNNNNNN) show a composition bias toward low complexity. The 123-residue stretch at 478–600 (KEKILSEYKP…KQWLDDKRAQ (123 aa)) folds into the dDENN domain.

Belongs to the DENND6 family.

This chain is Protein DENND6 homolog, found in Dictyostelium discoideum (Social amoeba).